Consider the following 190-residue polypeptide: Major sperm protein 32 (190 aa).

One can recognise an MSP domain in the interval 72–189 (MIQTQPGTKI…RRKNLPIEYN (118 aa)).

Sperm.

The protein resides in the cell projection. The protein localises to the pseudopodium. Its subcellular location is the cytoplasm. It is found in the cytoskeleton. In terms of biological role, central component in molecular interactions underlying sperm crawling. Forms an extensive filament system that extends from sperm villipoda, along the leading edge of the pseudopod. In Caenorhabditis elegans, this protein is Major sperm protein 32 (msp-32).